Reading from the N-terminus, the 61-residue chain is Large ribosomal subunit protein eL20 (61 aa).

This sequence belongs to the eukaryotic ribosomal protein eL20 family. Part of the 50S ribosomal subunit. Binds 23S rRNA.

In Methanosarcina acetivorans (strain ATCC 35395 / DSM 2834 / JCM 12185 / C2A), this protein is Large ribosomal subunit protein eL20.